Here is a 403-residue protein sequence, read N- to C-terminus: Flavohemoprotein (403 aa).

The region spanning 1-138 (MLTPEQKAIV…LADLMIGIEK (138 aa)) is the Globin domain. H85 contacts heme b. Catalysis depends on charge relay system residues Y95 and E137. Residues 149-403 (GGWRDFRPFR…SQSFAPVILG (255 aa)) are reductase. Residues 152 to 257 (RDFRPFRVAR…HVPAGDFVLQ (106 aa)) form the FAD-binding FR-type domain. Residues Y190 and 206 to 209 (RQYS) contribute to the FAD site. Residue 269–274 (GVGITP) participates in NADP(+) binding. 390-393 (TFGP) contacts FAD.

It belongs to the globin family. Two-domain flavohemoproteins subfamily. In the C-terminal section; belongs to the flavoprotein pyridine nucleotide cytochrome reductase family. It depends on heme b as a cofactor. FAD serves as cofactor.

It catalyses the reaction 2 nitric oxide + NADPH + 2 O2 = 2 nitrate + NADP(+) + H(+). It carries out the reaction 2 nitric oxide + NADH + 2 O2 = 2 nitrate + NAD(+) + H(+). This is Flavohemoprotein from Deinococcus radiodurans (strain ATCC 13939 / DSM 20539 / JCM 16871 / CCUG 27074 / LMG 4051 / NBRC 15346 / NCIMB 9279 / VKM B-1422 / R1).